A 317-amino-acid chain; its full sequence is High-affinity zinc uptake system protein ZnuA (317 aa).

The first 31 residues, 1–31 (MNINIMLKNKKKKFFSILAILFILMPNNSYA), serve as a signal peptide directing secretion. C259 and C313 are oxidised to a cystine.

It belongs to the bacterial solute-binding protein 9 family.

It is found in the periplasm. Its function is as follows. Part of the ATP-binding cassette (ABC) transport system ZnuABC involved in zinc import. Binds zinc with high affinity and specificity and delivers it to the membrane permease for translocation into the cytoplasm. This is High-affinity zinc uptake system protein ZnuA (znuA) from Buchnera aphidicola subsp. Schizaphis graminum (strain Sg).